Reading from the N-terminus, the 461-residue chain is Ribosomal protein uS12 methylthiotransferase RimO (461 aa).

The region spanning 9–124 is the MTTase N-terminal domain; sequence PRIGMVSLGC…VMDAVHLNLP (116 aa). Positions 18, 54, 83, 159, 163, and 166 each coordinate [4Fe-4S] cluster. The Radical SAM core domain occupies 145-387; the sequence is LTPRHYAYLK…AVAEAVSSQK (243 aa). The TRAM domain occupies 389-461; sequence QQRVGATMQV…QGHDLIAVPV (73 aa).

It belongs to the methylthiotransferase family. RimO subfamily. Requires [4Fe-4S] cluster as cofactor.

The protein resides in the cytoplasm. It catalyses the reaction L-aspartate(89)-[ribosomal protein uS12]-hydrogen + (sulfur carrier)-SH + AH2 + 2 S-adenosyl-L-methionine = 3-methylsulfanyl-L-aspartate(89)-[ribosomal protein uS12]-hydrogen + (sulfur carrier)-H + 5'-deoxyadenosine + L-methionine + A + S-adenosyl-L-homocysteine + 2 H(+). Functionally, catalyzes the methylthiolation of an aspartic acid residue of ribosomal protein uS12. This is Ribosomal protein uS12 methylthiotransferase RimO from Polaromonas naphthalenivorans (strain CJ2).